The chain runs to 261 residues: Indole-3-glycerol phosphate synthase (261 aa).

The protein belongs to the TrpC family.

It catalyses the reaction 1-(2-carboxyphenylamino)-1-deoxy-D-ribulose 5-phosphate + H(+) = (1S,2R)-1-C-(indol-3-yl)glycerol 3-phosphate + CO2 + H2O. The protein operates within amino-acid biosynthesis; L-tryptophan biosynthesis; L-tryptophan from chorismate: step 4/5. The chain is Indole-3-glycerol phosphate synthase from Paraburkholderia phymatum (strain DSM 17167 / CIP 108236 / LMG 21445 / STM815) (Burkholderia phymatum).